The sequence spans 79 residues: Defensin 2 (79 aa).

The first 32 residues, 1 to 32 (VQKRTIIMEKKMAGFCIFFLILFLAQEYGVEG), serve as a signal peptide directing secretion. 3 disulfide bridges follow: Cys-35–Cys-79, Cys-46–Cys-67, and Cys-52–Cys-73.

The protein belongs to the DEFL family. As to quaternary structure, may form dimers. Not glycosylated. Post-translationally, has 4 disulfide bonds.

Its function is as follows. Probably has antifungal activity. The chain is Defensin 2 from Arachis hypogaea (Peanut).